The chain runs to 443 residues: Elongation factor 1-alpha (443 aa).

The tr-type G domain occupies 5–228; the sequence is KTHINLVVIG…DTMQPPKRPY (224 aa). Residues 14-21 form a G1 region; it reads GHVDSGKS. 14-21 lines the GTP pocket; sequence GHVDSGKS. The segment at 70–74 is G2; the sequence is GITID. A G3 region spans residues 91 to 94; the sequence is DAPG. Residues 91–95 and 153–156 contribute to the GTP site; these read DAPGH and NKMD. The segment at 153-156 is G4; it reads NKMD. A G5 region spans residues 192–194; the sequence is SGF.

Belongs to the TRAFAC class translation factor GTPase superfamily. Classic translation factor GTPase family. EF-Tu/EF-1A subfamily.

The protein resides in the cytoplasm. Its function is as follows. This protein promotes the GTP-dependent binding of aminoacyl-tRNA to the A-site of ribosomes during protein biosynthesis. The sequence is that of Elongation factor 1-alpha (MEF-1) from Plasmodium falciparum (isolate K1 / Thailand).